A 218-amino-acid chain; its full sequence is Histidine biosynthesis bifunctional protein HisIE (218 aa).

The segment at 1–118 (MTDLSELNFD…DAPDTGLDGT (118 aa)) is phosphoribosyl-AMP cyclohydrolase. The segment at 119–218 (LERVYATITE…SGLKGPKEVG (100 aa)) is phosphoribosyl-ATP pyrophosphohydrolase.

It in the N-terminal section; belongs to the PRA-CH family. In the C-terminal section; belongs to the PRA-PH family.

The protein localises to the cytoplasm. The enzyme catalyses 1-(5-phospho-beta-D-ribosyl)-ATP + H2O = 1-(5-phospho-beta-D-ribosyl)-5'-AMP + diphosphate + H(+). It carries out the reaction 1-(5-phospho-beta-D-ribosyl)-5'-AMP + H2O = 1-(5-phospho-beta-D-ribosyl)-5-[(5-phospho-beta-D-ribosylamino)methylideneamino]imidazole-4-carboxamide. The protein operates within amino-acid biosynthesis; L-histidine biosynthesis; L-histidine from 5-phospho-alpha-D-ribose 1-diphosphate: step 2/9. It participates in amino-acid biosynthesis; L-histidine biosynthesis; L-histidine from 5-phospho-alpha-D-ribose 1-diphosphate: step 3/9. This is Histidine biosynthesis bifunctional protein HisIE (hisI) from Deinococcus radiodurans (strain ATCC 13939 / DSM 20539 / JCM 16871 / CCUG 27074 / LMG 4051 / NBRC 15346 / NCIMB 9279 / VKM B-1422 / R1).